We begin with the raw amino-acid sequence, 604 residues long: MADDKGTDPKEGCSDFIYLEAECSDISDLDNDLETLLEEGAGSDISDLINDEVVEQGNSRELLCQQEREESELQVQYLKRKCFSPKAVQELSPRLQSMNISSEHKSKRRLFVEQDSGLELSLNEAEDSTQELEVPASAPAPAAEGDIGLGTVRDLLRSSNSRATLLSKFKDSFGVSFTELTRQYKSNKTCCHHWVLAVYAAKDDLIDASKQLLQQHCFYIWLQSFCPMSLYLCCFNVGKSRDTVVRLIATLLQVHENHILSEPPKNRSIPAALFWYKGSLNSNVFCFGEAPDWILSQTMIQHQTADTLQFDLSRMIQWAYDNDHIDESIIAYQYAKLADIDSNAKAFLAHNSQVKYVKECALMVRYYKRGEMKEMSISAWIHHCISKVEGEGNWQHIVRFIRYQNLNFIMFLDKFRTFLKNLPKKNCLLIYGPPDTGKSMFAMSLIKLLKGSVVSFANSKSQFWLQPLADGKIGLLDDATDVCWQYIDSFLRNGLDGNLVSLDIKHKAPCQMKFPPLIITSNINLLKEERYRFLHSRVTQIDFPNKFPFDSDNKPLFELTDQSWASFFKRLWTQLELSDQEDEGDNGNSQRTFHCTAREVNGHI.

A Nuclear localization signal motif is present at residues 79-81; it reads KRK. A phosphoserine; by host mark is found at Ser84 and Ser92. The tract at residues 144 to 307 is DNA-binding region; sequence EGDIGLGTVR…TMIQHQTADT (164 aa). One can recognise an SF3 helicase domain in the interval 406 to 556; that stretch reads LNFIMFLDKF…FPFDSDNKPL (151 aa). 432–439 contributes to the ATP binding site; the sequence is GPPDTGKS. Residue Lys513 forms a Glycyl lysine isopeptide (Lys-Gly) (interchain with G-Cter in SUMO) linkage.

The protein belongs to the papillomaviridae E1 protein family. Can form hexamers. Interacts with E2 protein; this interaction increases E1 DNA binding specificity. Interacts with host DNA polymerase subunit POLA2. Interacts with host single stranded DNA-binding protein RPA1. Interacts with host TOP1; this interaction stimulates the enzymatic activity of TOP1. Phosphorylated. Post-translationally, sumoylated.

The protein localises to the host nucleus. The enzyme catalyses Couples ATP hydrolysis with the unwinding of duplex DNA by translocating in the 3'-5' direction.. It carries out the reaction ATP + H2O = ADP + phosphate + H(+). Its function is as follows. ATP-dependent DNA 3'-5' helicase required for initiation of viral DNA replication. It forms a complex with the viral E2 protein. The E1-E2 complex binds to the replication origin which contains binding sites for both proteins. During the initial step, a dimer of E1 interacts with a dimer of protein E2 leading to a complex that binds the viral origin of replication with high specificity. Then, a second dimer of E1 displaces the E2 dimer in an ATP-dependent manner to form the E1 tetramer. Following this, two E1 monomers are added to each half of the site, which results in the formation of two E1 trimers on the viral ori. Subsequently, two hexamers will be created. The double hexamer acts as a bi-directional helicase machinery and unwinds the viral DNA and then recruits the host DNA polymerase to start replication. This chain is Replication protein E1, found in Homo sapiens (Human).